A 151-amino-acid polypeptide reads, in one-letter code: Small ribosomal subunit protein uS15y (151 aa).

The protein belongs to the universal ribosomal protein uS15 family.

In Oryza sativa subsp. japonica (Rice), this protein is Small ribosomal subunit protein uS15y.